A 224-amino-acid chain; its full sequence is ATP-dependent Clp protease proteolytic subunit 1 (224 aa).

S120 (nucleophile) is an active-site residue. H145 is an active-site residue.

The protein belongs to the peptidase S14 family. As to quaternary structure, fourteen ClpP subunits assemble into 2 heptameric rings which stack back to back to give a disk-like structure with a central cavity, resembling the structure of eukaryotic proteasomes.

The protein resides in the cytoplasm. The catalysed reaction is Hydrolysis of proteins to small peptides in the presence of ATP and magnesium. alpha-casein is the usual test substrate. In the absence of ATP, only oligopeptides shorter than five residues are hydrolyzed (such as succinyl-Leu-Tyr-|-NHMec, and Leu-Tyr-Leu-|-Tyr-Trp, in which cleavage of the -Tyr-|-Leu- and -Tyr-|-Trp bonds also occurs).. In terms of biological role, cleaves peptides in various proteins in a process that requires ATP hydrolysis. Has a chymotrypsin-like activity. Plays a major role in the degradation of misfolded proteins. The protein is ATP-dependent Clp protease proteolytic subunit 1 of Prochlorococcus marinus (strain MIT 9313).